The following is a 631-amino-acid chain: Squalene--hopene cyclase (631 aa).

3 PFTB repeats span residues 15–56 (LDRA…LDRV), 61–102 (MEKI…KYIG), and 241–282 (EIRA…QHPA). The active-site Proton donor is aspartate 376. PFTB repeat units lie at residues 400 to 441 (MTKG…GEVT), 468 to 508 (IRRA…KAVG), 516 to 557 (IQKA…SQTA), and 574 to 622 (ARRG…LALG).

Belongs to the terpene cyclase/mutase family. As to quaternary structure, homodimer.

It is found in the cell membrane. The enzyme catalyses squalene = hop-22(29)-ene. It catalyses the reaction squalene + H2O = hopan-22-ol. The protein operates within secondary metabolite biosynthesis; hopanoid biosynthesis. Functionally, catalyzes the cyclization of squalene to two pentacyclic triterpenes, hop-22(29)-ene and hopan-22-ol (diplopterol); hopene and hopanol are formed at a constant ratio of 5:1. Is a key enzyme of hopanoid biosynthesis; hopanoids are components of the bacterial cytoplasmic membranes that play a vital role in stabilizing the membranes. The chain is Squalene--hopene cyclase (shc) from Alicyclobacillus acidocaldarius subsp. acidocaldarius (strain ATCC 27009 / DSM 446 / BCRC 14685 / JCM 5260 / KCTC 1825 / NBRC 15652 / NCIMB 11725 / NRRL B-14509 / 104-IA) (Bacillus acidocaldarius).